Here is a 273-residue protein sequence, read N- to C-terminus: 2-dehydro-3-deoxyphosphooctonate aldolase (273 aa).

This sequence belongs to the KdsA family.

The protein localises to the cytoplasm. The catalysed reaction is D-arabinose 5-phosphate + phosphoenolpyruvate + H2O = 3-deoxy-alpha-D-manno-2-octulosonate-8-phosphate + phosphate. It functions in the pathway carbohydrate biosynthesis; 3-deoxy-D-manno-octulosonate biosynthesis; 3-deoxy-D-manno-octulosonate from D-ribulose 5-phosphate: step 2/3. Its pathway is bacterial outer membrane biogenesis; lipopolysaccharide biosynthesis. The protein is 2-dehydro-3-deoxyphosphooctonate aldolase of Desulfatibacillum aliphaticivorans.